An 88-amino-acid polypeptide reads, in one-letter code: Probable glutaredoxin ssr2061 (88 aa).

Residues C15 and C18 are joined by a disulfide bond.

It belongs to the glutaredoxin family.

Has a glutathione-disulfide oxidoreductase activity in the presence of NADPH and glutathione reductase. Reduces low molecular weight disulfides and proteins. This chain is Probable glutaredoxin ssr2061, found in Synechocystis sp. (strain ATCC 27184 / PCC 6803 / Kazusa).